A 39-amino-acid chain; its full sequence is LIM/homeobox protein xLIM-2B (39 aa).

A DNA-binding region (homeobox) is located at residues 1–39; it reads KAKQLETLKAAFAATPKPTRHIREQLAQETGLNMRVIQV.

The protein localises to the nucleus. The polypeptide is LIM/homeobox protein xLIM-2B (lim2b) (Xenopus laevis (African clawed frog)).